The chain runs to 73 residues: Putative antimicrobial peptide clone 5 (73 aa).

A signal peptide spans 1-22 (MQIKHLITLFFLVLIGADQCSA). Residues 45-73 (EVSPQIDQYRNFQKREAELEELLDRLPMY) constitute a propeptide that is removed on maturation.

It belongs to the non-disulfide-bridged peptide (NDBP) superfamily. Short antimicrobial peptide (group 4) family. As to expression, expressed by the venom gland.

It localises to the secreted. Antibacterial peptide. This chain is Putative antimicrobial peptide clone 5, found in Tityus costatus (Brazilian scorpion).